Consider the following 268-residue polypeptide: Ribosomal RNA large subunit methyltransferase E (268 aa).

Residues 1-60 are disordered; the sequence is MKPPRSRSGSSKDTGPKRIPGKALKSASNPGENDATLDSATARTARNKTVSLRTARGRTT. A compositionally biased stretch (polar residues) spans 26-52; it reads SASNPGENDATLDSATARTARNKTVSL. 5 residues coordinate S-adenosyl-L-methionine: Gly-115, Trp-117, Asp-133, Asp-149, and Asp-173. Residue Lys-213 is the Proton acceptor of the active site.

This sequence belongs to the class I-like SAM-binding methyltransferase superfamily. RNA methyltransferase RlmE family.

The protein localises to the cytoplasm. The enzyme catalyses uridine(2552) in 23S rRNA + S-adenosyl-L-methionine = 2'-O-methyluridine(2552) in 23S rRNA + S-adenosyl-L-homocysteine + H(+). Specifically methylates the uridine in position 2552 of 23S rRNA at the 2'-O position of the ribose in the fully assembled 50S ribosomal subunit. This Gluconobacter oxydans (strain 621H) (Gluconobacter suboxydans) protein is Ribosomal RNA large subunit methyltransferase E.